The following is a 264-amino-acid chain: Late embryogenesis abundant protein D-34 (264 aa).

Residues Met1–Gly16 are compositionally biased toward low complexity. The segment at Met1–Lys23 is disordered. SMP domains lie at Ile22–Gln76, Ile138–Ala194, and Ile203–Asn261.

It belongs to the LEA type SMP family.

In terms of biological role, LEA proteins are late embryonic proteins abundant in higher plant seed embryos. There are two subsets of LEA proteins (5a and 5b), the first ones are expressed when the cotyledon weight reach 80 mg and the second set are expressed above 100 mg. The function of those proteins is not known. This Gossypium hirsutum (Upland cotton) protein is Late embryogenesis abundant protein D-34.